The sequence spans 453 residues: MARSSSWHRMSNFMRKYRKIPHSSFKTKWNENLKQKYAMEELRSNLLTDSENASVMRTLLSSFQLHNCEPTPQAYRFVIKTLAKSSQLENISSVLYHLEVSEKFDTPESIFRDVIAAYGFSGRIEEAIEVFFKIPNFRCVPSAYTLNALLLVLVRKRQSLELVPEILVKACRMGVRLEESTFGILIDALCRIGEVDCATELVRYMSQDSVIVDPRLYSRLLSSVCKHKDSSCFDVIGYLEDLRKTRFSPGLRDYTVVMRFLVEGGRGKEVVSVLNQMKCDRVEPDLVCYTIVLQGVIADEDYPKADKLFDELLLLGLAPDVYTYNVYINGLCKQNDIEGALKMMSSMNKLGSEPNVVTYNILIKALVKAGDLSRAKTLWKEMETNGVNRNSHTFDIMISAYIEVDEVVCAHGLLEEAFNMNVFVKSSRIEEVISRLCEKGLMDQAVELLAHLV.

The transit peptide at 1–77 directs the protein to the mitochondrion; it reads MARSSSWHRM…CEPTPQAYRF (77 aa). 9 PPR repeats span residues 107–141, 142–177, 178–212, 213–249, 250–284, 285–319, 320–354, 355–389, and 390–424; these read PESI…RCVP, SAYT…GVRL, EEST…SVIV, DPRL…RFSP, GLRD…RVEP, DLVC…GLAP, DVYT…GSEP, NVVT…GVNR, and NSHT…NVFV.

The protein belongs to the PPR family. P subfamily.

Its subcellular location is the mitochondrion. The polypeptide is Pentatricopeptide repeat-containing protein At2g38420, mitochondrial (Arabidopsis thaliana (Mouse-ear cress)).